Here is a 60-residue protein sequence, read N- to C-terminus: Light-harvesting polypeptide B-885 alpha-2 chain (60 aa).

Residues 1–16 lie on the Cytoplasmic side of the membrane; the sequence is SAPAQWKLWLVMDPRT. The chain crosses the membrane as a helical span at residues 17 to 37; sequence VMIGTAAWLGVLALLIHFLLL. His-33 is a binding site for a bacteriochlorophyll. Topologically, residues 38–60 are periplasmic; that stretch reads GTERFNWIDTGLKEQKATAAAQA.

Belongs to the antenna complex alpha subunit family. As to quaternary structure, the core complex is formed by different alpha and beta chains, binding bacteriochlorophyll molecules, and arranged most probably in tetrameric structures disposed around the reaction center. The non-pigmented gamma chains may constitute additional components.

The protein localises to the cell inner membrane. Antenna complexes are light-harvesting systems, which transfer the excitation energy to the reaction centers. The sequence is that of Light-harvesting polypeptide B-885 alpha-2 chain from Rhodocyclus tenuis (Rhodospirillum tenue).